We begin with the raw amino-acid sequence, 88 residues long: Large ribosomal subunit protein bL27 (88 aa).

Residues M1–L21 form a disordered region.

Belongs to the bacterial ribosomal protein bL27 family.

This is Large ribosomal subunit protein bL27 from Mycobacterium sp. (strain MCS).